Here is a 436-residue protein sequence, read N- to C-terminus: DNA-dependent metalloprotease SPRTN (436 aa).

Positions 19–186 (IRALFLEFND…RTCGGEFVKI (168 aa)) constitute a SprT-like domain. H85 provides a ligand contact to Zn(2+). E86 is a catalytic residue. Zn(2+)-binding residues include H89 and H104. Residues 184–219 (VKIKEPENYSQKRKRNNDPTKSELGNSSHVKINKGK) are disordered. Residues 231–239 (FSGTGYKLF) carry the SHP-box motif. The short motif at 271-277 (QTDSTFL) is the PIP-box element. The interval 300 to 321 (GSPIKLPSSSNNKSHQDSSKQK) is disordered. A UBZ4-type zinc finger spans residues 408–435 (KVCCPVCGTEIFESKINDHLDTCLQNYN). C411, C414, H426, and C430 together coordinate Zn(2+).

This sequence belongs to the Spartan family. As to quaternary structure, homodimer. Zn(2+) is required as a cofactor. In terms of processing, autocatalytically cleaved in response to double-stranded DNA-binding: autocatalytic cleavage takes place in trans and leads to inactivation.

The protein localises to the nucleus. It localises to the chromosome. DNA-binding activates the protease activity: single-stranded DNA-binding specifically activates ability to cleave covalent DNA-protein cross-links (DPCs). In contrast, double-stranded DNA-binding specifically activates autocatalytic cleavage, and subsequent inactivation. DNA-dependent metalloendopeptidase that mediates the proteolytic cleavage of covalent DNA-protein cross-links (DPCs) during DNA synthesis, thereby playing a key role in maintaining genomic integrity. DPCs are highly toxic DNA lesions that interfere with essential chromatin transactions, such as replication and transcription, and which are induced by reactive agents, such as UV light or formaldehyde. Associates with the DNA replication machinery and specifically removes DPCs during DNA synthesis. Catalyzes proteolytic cleavage of the hmces DNA-protein cross-link following unfolding by the brip1/fancj helicase. Acts as a pleiotropic protease for DNA-binding proteins cross-linked with DNA, such as top1, top2a, histones H3 and H4. Mediates degradation of DPCs that are not ubiquitinated, while it is not able to degrade ubiquitinated DPCs. SPRTN activation requires polymerase collision with DPCs followed by helicase bypass of DPCs. May also act as a 'reader' of ubiquitinated pcna: facilitates chromatin association of rad18 and is required for efficient pcna monoubiquitination, promoting a feed-forward loop to enhance pcna ubiquitination and translesion DNA synthesis. Acts as a regulator of translesion DNA synthesis by recruiting vcp/p97 to sites of DNA damage. The chain is DNA-dependent metalloprotease SPRTN from Xenopus tropicalis (Western clawed frog).